A 315-amino-acid polypeptide reads, in one-letter code: Methionyl-tRNA formyltransferase (315 aa).

A (6S)-5,6,7,8-tetrahydrofolate-binding site is contributed by 113–116 (SLLP).

Belongs to the Fmt family.

It carries out the reaction L-methionyl-tRNA(fMet) + (6R)-10-formyltetrahydrofolate = N-formyl-L-methionyl-tRNA(fMet) + (6S)-5,6,7,8-tetrahydrofolate + H(+). In terms of biological role, attaches a formyl group to the free amino group of methionyl-tRNA(fMet). The formyl group appears to play a dual role in the initiator identity of N-formylmethionyl-tRNA by promoting its recognition by IF2 and preventing the misappropriation of this tRNA by the elongation apparatus. The chain is Methionyl-tRNA formyltransferase from Escherichia coli O127:H6 (strain E2348/69 / EPEC).